Here is a 375-residue protein sequence, read N- to C-terminus: Growth/differentiation factor 8 (375 aa).

Positions 1–18 (MQRLQICVYIYLFVLIVA) are cleaved as a signal peptide. Positions 19–266 (GPVDLSENSE…VTDTPKRSRR (248 aa)) are excised as a propeptide. An N-linked (GlcNAc...) asparagine glycan is attached at asparagine 71. 4 cysteine pairs are disulfide-bonded: cysteine 272-cysteine 282, cysteine 281-cysteine 340, cysteine 309-cysteine 372, and cysteine 313-cysteine 374.

Belongs to the TGF-beta family. In terms of assembly, homodimer; disulfide-linked. Interacts with WFIKKN2, leading to inhibit its activity. Interacts with FSTL3. Post-translationally, synthesized as large precursor molecule that undergoes proteolytic cleavage to generate an N-terminal propeptide and a disulfide linked C-terminal dimer, which is the biologically active molecule. The circulating form consists of a latent complex of the C-terminal dimer and other proteins, including its propeptide, which maintain the C-terminal dimer in a latent, inactive state. Ligand activation requires additional cleavage of the prodomain by a tolloid-like metalloproteinase.

Its subcellular location is the secreted. Its function is as follows. Acts specifically as a negative regulator of skeletal muscle growth. The protein is Growth/differentiation factor 8 (MSTN) of Canis lupus familiaris (Dog).